A 545-amino-acid polypeptide reads, in one-letter code: Chaperonin GroEL 1 (545 aa).

ATP contacts are provided by residues 29-32 (TLGP), 86-90 (DGTTT), Gly-413, 479-481 (DAA), and Asp-495. The segment at 525–545 (PEPKENNPAGSGAGMGGDFDY) is disordered. The segment covering 535-545 (SGAGMGGDFDY) has biased composition (gly residues).

This sequence belongs to the chaperonin (HSP60) family. In terms of assembly, forms a cylinder of 14 subunits composed of two heptameric rings stacked back-to-back. Interacts with the co-chaperonin GroES.

It localises to the cytoplasm. The catalysed reaction is ATP + H2O + a folded polypeptide = ADP + phosphate + an unfolded polypeptide.. Its function is as follows. Together with its co-chaperonin GroES, plays an essential role in assisting protein folding. The GroEL-GroES system forms a nano-cage that allows encapsulation of the non-native substrate proteins and provides a physical environment optimized to promote and accelerate protein folding. The sequence is that of Chaperonin GroEL 1 from Thermostichus vulcanus (Synechococcus vulcanus).